Reading from the N-terminus, the 301-residue chain is Protein FdhE homolog (301 aa).

Belongs to the FdhE family.

It is found in the cytoplasm. Its function is as follows. Necessary for formate dehydrogenase activity. In Shewanella baltica (strain OS223), this protein is Protein FdhE homolog.